The primary structure comprises 121 residues: ATP synthase epsilon chain (121 aa).

It belongs to the ATPase epsilon chain family. In terms of assembly, F-type ATPases have 2 components, CF(1) - the catalytic core - and CF(0) - the membrane proton channel. CF(1) has five subunits: alpha(3), beta(3), gamma(1), delta(1), epsilon(1). CF(0) has three main subunits: a, b and c.

The protein localises to the cell membrane. Produces ATP from ADP in the presence of a proton gradient across the membrane. The polypeptide is ATP synthase epsilon chain (Mycobacterium marinum (strain ATCC BAA-535 / M)).